We begin with the raw amino-acid sequence, 302 residues long: Heme A synthase (302 aa).

The Cytoplasmic segment spans residues 1–8; sequence MFRKQNLK. The helical transmembrane segment at 9-29 threads the bilayer; sequence WLGVLATIIMTFVQLGGALVT. At 30–67 the chain is on the extracellular side; that stretch reads KTGSEDGCGSSWPLCNGALLPENLPIQTIIELSHRAVS. A disulfide bridge connects residues C37 and C44. The active site involves E60. H63 lines the heme o pocket. Residues 68–88 traverse the membrane as a helical segment; it reads AISLIVVLWLVITAWKNIGYI. Residues 89–93 lie on the Cytoplasmic side of the membrane; sequence KEIKP. The chain crosses the membrane as a helical span at residues 94–114; that stretch reads LSIISVGFLLVQALVGAAAVI. Residues 115–125 lie on the Extracellular side of the membrane; it reads WQQNPYVLALH. H125 contributes to the heme o binding site. Residues 126 to 146 traverse the membrane as a helical segment; that stretch reads FGISLISFSSVFLMTLIIFSI. The Cytoplasmic segment spans residues 147–161; it reads DKKYEADILFIHKPL. A helical membrane pass occupies residues 162–182; that stretch reads RILTWLMAIIVYLTIYTGALV. At 183 to 215 the chain is on the extracellular side; the sequence is RHTKSSLAYGAWPIPFDDIVPHNAHDWVQFSHR. H214 is a heme b binding site. Residues 216 to 236 form a helical membrane-spanning segment; sequence GMAFITFIWIMITFIHAIKNY. At 237–244 the chain is on the cytoplasmic side; sequence SDNRTVRY. The chain crosses the membrane as a helical span at residues 245–265; the sequence is GYTASFILVILQVITGALSVI. Over 266–270 the chain is Extracellular; the sequence is TNVNL. A helical membrane pass occupies residues 271-291; sequence IIALFHALFITYLFGMIAYFI. H276 provides a ligand contact to heme b. The Cytoplasmic portion of the chain corresponds to 292-302; that stretch reads LLMLRTTRSLK.

This sequence belongs to the COX15/CtaA family. Type 1 subfamily. In terms of assembly, interacts with CtaB. It depends on heme b as a cofactor.

Its subcellular location is the cell membrane. It catalyses the reaction Fe(II)-heme o + 2 A + H2O = Fe(II)-heme a + 2 AH2. It functions in the pathway porphyrin-containing compound metabolism; heme A biosynthesis; heme A from heme O: step 1/1. Catalyzes the conversion of heme O to heme A by two successive hydroxylations of the methyl group at C8. The first hydroxylation forms heme I, the second hydroxylation results in an unstable dihydroxymethyl group, which spontaneously dehydrates, resulting in the formyl group of heme A. The protein is Heme A synthase of Staphylococcus epidermidis (strain ATCC 12228 / FDA PCI 1200).